The primary structure comprises 684 residues: Glycine--tRNA ligase beta subunit (684 aa).

This sequence belongs to the class-II aminoacyl-tRNA synthetase family. In terms of assembly, tetramer of two alpha and two beta subunits.

The protein localises to the cytoplasm. It catalyses the reaction tRNA(Gly) + glycine + ATP = glycyl-tRNA(Gly) + AMP + diphosphate. This is Glycine--tRNA ligase beta subunit from Pseudomonas fluorescens (strain Pf0-1).